Reading from the N-terminus, the 357-residue chain is Neurogenic differentiation factor 1 (357 aa).

Residues 1–94 (MTKSYSESGL…GPKKKKMTKA (94 aa)) are disordered. Residues 58–78 (EEEEEDEDLEEEEEEEEEEED) show a composition bias toward acidic residues. A compositionally biased stretch (basic residues) spans 81-93 (PKRRGPKKKKMTK). A Nuclear localization signal motif is present at residues 87–93 (KKKKMTK). In terms of domain architecture, bHLH spans 101–153 (LRRMKANARERNRMHGLNAALDNLRKVVPCYSKTQKLSKIETLRLAKNYIWAL). Ser162, Ser259, Ser266, and Ser274 each carry phosphoserine. At Ser336 the chain carries Phosphoserine; by CaMK2.

Efficient DNA-binding requires dimerization with another bHLH protein. Heterodimer with TCF3/E47; the heterodimer is inhibited in presence of ID2, but not NR0B2, to E-box element. Interacts with EP300; the interaction is inhibited by NR0B2. Interacts with RREB1. Interacts with ATOH8. In terms of processing, in islet cells, phosphorylated on Ser-274 upon glucose stimulation; which may be required for nuclear localization. In activated neurons, phosphorylated on Ser-336; which promotes dendritic growth. Phosphorylated by MAPK1; phosphorylation regulates heterodimerization and DNA-binding activities. Phosphorylation on Ser-266 and Ser-274 increases transactivation on the insulin promoter in glucose-stimulated insulinoma cells. Expressed in pancreatic beta cells, pulmonary neuroendocrine cells and retinal interneurons amacrine cells (at protein level). Expressed in endocrine cells of the pancreas. Expressed in the inner layer of cerebellar external granular layer (EGL). Expressed in the Ammon's horn (AH), which includes the CA1-CA3 pyramidal layer and in granule cells of the dentate gyrus (DG). Expressed in photoreceptors of the outer nuclear layer (ONL), in a subset of cells in the lower half of the inner nuclear layer (INL), and in a subset of cells in the ganglion cell layer (GCL) of the retina. Expressed in cholinergic and AII amacrine cell types. Expressed in differentiating neurons of both the central and peripheral nervous systems.

The protein localises to the cytoplasm. It localises to the nucleus. In terms of biological role, acts as a transcriptional activator: mediates transcriptional activation by binding to E box-containing promoter consensus core sequences 5'-CANNTG-3'. Associates with the p300/CBP transcription coactivator complex to stimulate transcription of the secretin gene as well as the gene encoding the cyclin-dependent kinase inhibitor CDKN1A. Contributes to the regulation of several cell differentiation pathways, like those that promote the formation of early retinal ganglion cells, inner ear sensory neurons, granule cells forming either the cerebellum or the dentate gyrus cell layer of the hippocampus, endocrine islet cells of the pancreas and enteroendocrine cells of the small intestine. Together with PAX6 or SIX3, is required for the regulation of amacrine cell fate specification. Also required for dendrite morphogenesis and maintenance in the cerebellar cortex. Associates with chromatin to enhancer regulatory elements in genes encoding key transcriptional regulators of neurogenesis. The sequence is that of Neurogenic differentiation factor 1 (Neurod1) from Mus musculus (Mouse).